The chain runs to 366 residues: MSGNTLGTLFTVTTFGESHGPAIGCVIDGCPPGMGLTEADIQIELDRRKPGTSRHVTQRQEADEVEILSGVFEGVTTGTPIALLIRNTDQRSKDYGNIVETFRPGHADYTYWQKYGIRDYRGGGRSSARLTAPIVGAGAVAKKWLRERFGVEVRGYMSGLGEIDVPFVDWSHVHENPFFSPNAAVVPELEAYMDALRKDGDSIGARIDVVASGVPVGWGEPVFDRLDADIAKAMMSINAVKGVEIGAGFDSVAQRGSVHGDELTPAGFVGNHAGGVLGGISTGQDITVSIAIKPTSSIRTPRRSITKSGDEATVETFGRHDPCVGIRATPIAESMLALVLIDHALRHRAQCGDVETSTPKIAGSAT.

2 residues coordinate NADP(+): arginine 48 and arginine 54. FMN contacts are provided by residues arginine 125 to serine 127, asparagine 238 to alanine 239, glycine 278, lysine 293 to serine 297, and arginine 319.

The protein belongs to the chorismate synthase family. Homotetramer. FMNH2 serves as cofactor.

The catalysed reaction is 5-O-(1-carboxyvinyl)-3-phosphoshikimate = chorismate + phosphate. The protein operates within metabolic intermediate biosynthesis; chorismate biosynthesis; chorismate from D-erythrose 4-phosphate and phosphoenolpyruvate: step 7/7. Functionally, catalyzes the anti-1,4-elimination of the C-3 phosphate and the C-6 proR hydrogen from 5-enolpyruvylshikimate-3-phosphate (EPSP) to yield chorismate, which is the branch point compound that serves as the starting substrate for the three terminal pathways of aromatic amino acid biosynthesis. This reaction introduces a second double bond into the aromatic ring system. The chain is Chorismate synthase from Burkholderia cenocepacia (strain HI2424).